The sequence spans 310 residues: HPr kinase/phosphorylase (310 aa).

Active-site residues include His138 and Lys159. Residue 153-160 (GDSGIGKS) coordinates ATP. Position 160 (Ser160) interacts with Mg(2+). Asp177 acts as the Proton acceptor; for phosphorylation activity. Proton donor; for dephosphorylation activity in catalysis. An important for the catalytic mechanism of both phosphorylation and dephosphorylation region spans residues 201-210 (LEIRGVGIID). Residue Glu202 participates in Mg(2+) binding. Arg243 is an active-site residue. The interval 264 to 269 (PVKTGR) is important for the catalytic mechanism of dephosphorylation.

Belongs to the HPrK/P family. As to quaternary structure, homohexamer. It depends on Mg(2+) as a cofactor.

It carries out the reaction [HPr protein]-L-serine + ATP = [HPr protein]-O-phospho-L-serine + ADP + H(+). The catalysed reaction is [HPr protein]-O-phospho-L-serine + phosphate + H(+) = [HPr protein]-L-serine + diphosphate. Its function is as follows. Catalyzes the ATP- as well as the pyrophosphate-dependent phosphorylation of a specific serine residue in HPr, a phosphocarrier protein of the phosphoenolpyruvate-dependent sugar phosphotransferase system (PTS). HprK/P also catalyzes the pyrophosphate-producing, inorganic phosphate-dependent dephosphorylation (phosphorolysis) of seryl-phosphorylated HPr (P-Ser-HPr). The two antagonistic activities of HprK/P are regulated by several intracellular metabolites, which change their concentration in response to the absence or presence of rapidly metabolisable carbon sources (glucose, fructose, etc.) in the growth medium. Therefore, by controlling the phosphorylation state of HPr, HPrK/P is a sensor enzyme that plays a major role in the regulation of carbon metabolism and sugar transport: it mediates carbon catabolite repression (CCR), and regulates PTS-catalyzed carbohydrate uptake and inducer exclusion. In Streptococcus uberis (strain ATCC BAA-854 / 0140J), this protein is HPr kinase/phosphorylase.